The sequence spans 803 residues: Translation initiation factor IF-2 (803 aa).

2 disordered regions span residues 95–125 (PVVE…EKAE) and 138–178 (EVKE…EREE). Positions 111–121 (VPLTSDTTNLN) are enriched in polar residues. A compositionally biased stretch (basic and acidic residues) spans 138 to 155 (EVKEEAKKTPSEKKETPK). The span at 156–167 (KGPRKETRRSRK) shows a compositional bias: basic residues. Residues 168–178 (PDKEDKWEREE) show a composition bias toward basic and acidic residues. Positions 302 to 471 (PRAPVVTIMG…LLQAEVLELK (170 aa)) constitute a tr-type G domain. Residues 311 to 318 (GHVDHGKT) are G1. 311 to 318 (GHVDHGKT) contributes to the GTP binding site. A G2 region spans residues 336 to 340 (GITQH). Positions 357–360 (DTPG) are G3. GTP is bound by residues 357-361 (DTPGH) and 411-414 (NKID). Positions 411–414 (NKID) are G4. The G5 stretch occupies residues 447–449 (SAK).

The protein belongs to the TRAFAC class translation factor GTPase superfamily. Classic translation factor GTPase family. IF-2 subfamily.

It is found in the cytoplasm. In terms of biological role, one of the essential components for the initiation of protein synthesis. Protects formylmethionyl-tRNA from spontaneous hydrolysis and promotes its binding to the 30S ribosomal subunits. Also involved in the hydrolysis of GTP during the formation of the 70S ribosomal complex. The polypeptide is Translation initiation factor IF-2 (Coxiella burnetii (strain Dugway 5J108-111)).